Reading from the N-terminus, the 236-residue chain is Flagellar L-ring protein (236 aa).

Positions 1–24 are cleaved as a signal peptide; it reads MKNKNRLNTIKLLSISLLIAVTTA. Cysteine 25 is lipidated: N-palmitoyl cysteine. A lipid anchor (S-diacylglycerol cysteine) is attached at cysteine 25.

Belongs to the FlgH family. In terms of assembly, the basal body constitutes a major portion of the flagellar organelle and consists of four rings (L,P,S, and M) mounted on a central rod.

The protein resides in the cell outer membrane. It is found in the bacterial flagellum basal body. Its function is as follows. Assembles around the rod to form the L-ring and probably protects the motor/basal body from shearing forces during rotation. The protein is Flagellar L-ring protein of Colwellia psychrerythraea (strain 34H / ATCC BAA-681) (Vibrio psychroerythus).